The following is a 343-amino-acid chain: L-threonine 3-dehydrogenase (343 aa).

C38 lines the Zn(2+) pocket. Residues T40 and H43 each act as charge relay system in the active site. Residues H63, E64, C93, C96, C99, and C107 each contribute to the Zn(2+) site. NAD(+)-binding positions include I175, D195, R200, 262–264 (LGI), and 286–287 (IY).

This sequence belongs to the zinc-containing alcohol dehydrogenase family. Homotetramer. Zn(2+) serves as cofactor.

The protein resides in the cytoplasm. The catalysed reaction is L-threonine + NAD(+) = (2S)-2-amino-3-oxobutanoate + NADH + H(+). Its pathway is amino-acid degradation; L-threonine degradation via oxydo-reductase pathway; glycine from L-threonine: step 1/2. Catalyzes the NAD(+)-dependent oxidation of L-threonine to 2-amino-3-ketobutyrate. The protein is L-threonine 3-dehydrogenase of Paraburkholderia phytofirmans (strain DSM 17436 / LMG 22146 / PsJN) (Burkholderia phytofirmans).